A 227-amino-acid polypeptide reads, in one-letter code: Ureidoacrylate amidohydrolase RutB (227 aa).

Catalysis depends on D22, which acts as the Proton acceptor. The active site involves K131. C164 functions as the Nucleophile in the catalytic mechanism.

It belongs to the isochorismatase family. RutB subfamily.

The catalysed reaction is (Z)-3-ureidoacrylate + H2O + H(+) = (Z)-3-aminoacrylate + NH4(+) + CO2. It catalyses the reaction (Z)-3-ureidoacrylate + H2O = (Z)-3-aminoacrylate + carbamate + H(+). The enzyme catalyses (Z)-2-methylureidoacrylate + H2O + H(+) = (Z)-2-methylaminoacrylate + NH4(+) + CO2. Its function is as follows. Hydrolyzes ureidoacrylate to form aminoacrylate and carbamate. The carbamate hydrolyzes spontaneously, thereby releasing one of the nitrogen atoms of the pyrimidine ring as ammonia and one of its carbon atoms as CO2. The chain is Ureidoacrylate amidohydrolase RutB from Azorhizobium caulinodans (strain ATCC 43989 / DSM 5975 / JCM 20966 / LMG 6465 / NBRC 14845 / NCIMB 13405 / ORS 571).